The primary structure comprises 209 residues: rRNA N(6)-adenosine-methyltransferase METTL5 (209 aa).

Residues glutamine 28, threonine 31, glycine 59, cysteine 62, valine 64, aspartate 81, and 108–109 (DV) contribute to the S-adenosyl-L-methionine site.

It belongs to the methyltransferase superfamily. PrmA family. As to quaternary structure, heterodimer; heterodimerizes with TRMT112. In terms of tissue distribution, expressed from very early development (8 post-conceptual weeks) and expression persists through adulthood in multiple substructures of the brain, including the cerebellar cortex, hippocampus, and striatum.

The protein localises to the nucleus. It localises to the presynapse. The protein resides in the postsynapse. The catalysed reaction is adenosine(1832) in 18S rRNA + S-adenosyl-L-methionine = N(6)-methyladenosine(1832) in 18S rRNA + S-adenosyl-L-homocysteine + H(+). With respect to regulation, rRNA N6-adenosine-methyltransferase activity is inhibited by zinc. Catalytic subunit of a heterodimer with TRMT112, which specifically methylates the 6th position of adenine in position 1832 of 18S rRNA. N6-methylation of adenine(1832) in 18S rRNA resides in the decoding center of 18S rRNA and is required for translation and embryonic stem cells (ESCs) pluripotency and differentiation. The polypeptide is rRNA N(6)-adenosine-methyltransferase METTL5 (Homo sapiens (Human)).